The sequence spans 487 residues: Glutamyl-tRNA(Gln) amidotransferase subunit A (487 aa).

Catalysis depends on charge relay system residues lysine 77 and serine 152. The Acyl-ester intermediate role is filled by serine 176.

Belongs to the amidase family. GatA subfamily. Heterotrimer of A, B and C subunits.

The enzyme catalyses L-glutamyl-tRNA(Gln) + L-glutamine + ATP + H2O = L-glutaminyl-tRNA(Gln) + L-glutamate + ADP + phosphate + H(+). Its function is as follows. Allows the formation of correctly charged Gln-tRNA(Gln) through the transamidation of misacylated Glu-tRNA(Gln) in organisms which lack glutaminyl-tRNA synthetase. The reaction takes place in the presence of glutamine and ATP through an activated gamma-phospho-Glu-tRNA(Gln). The polypeptide is Glutamyl-tRNA(Gln) amidotransferase subunit A (Lysinibacillus sphaericus (strain C3-41)).